The following is a 623-amino-acid chain: Membrane protein insertase YidC (623 aa).

The next 5 helical transmembrane spans lie at 8–28 (LILA…LFPP), 379–399 (MGLA…PLAY), 449–469 (LPIL…FVTI), 507–527 (TTMA…SMWL), and 543–563 (IFAW…SGLV). Residues 601–617 (KPAAQPAGKAANDGAAP) show a composition bias toward low complexity. The disordered stretch occupies residues 601 to 623 (KPAAQPAGKAANDGAAPAKKRKP).

Belongs to the OXA1/ALB3/YidC family. Type 1 subfamily. Interacts with the Sec translocase complex via SecD. Specifically interacts with transmembrane segments of nascent integral membrane proteins during membrane integration.

It localises to the cell inner membrane. Its function is as follows. Required for the insertion and/or proper folding and/or complex formation of integral membrane proteins into the membrane. Involved in integration of membrane proteins that insert both dependently and independently of the Sec translocase complex, as well as at least some lipoproteins. Aids folding of multispanning membrane proteins. The protein is Membrane protein insertase YidC of Cereibacter sphaeroides (strain ATCC 17029 / ATH 2.4.9) (Rhodobacter sphaeroides).